Here is a 378-residue protein sequence, read N- to C-terminus: Erythronate-4-phosphate dehydrogenase (378 aa).

Residues S45 and T66 each coordinate substrate. Residues D146 and T175 each contribute to the NAD(+) site. Residue R208 is part of the active site. D232 lines the NAD(+) pocket. E237 is an active-site residue. Residue H254 is the Proton donor of the active site. Residue G257 coordinates NAD(+). Y258 contributes to the substrate binding site.

Belongs to the D-isomer specific 2-hydroxyacid dehydrogenase family. PdxB subfamily. In terms of assembly, homodimer.

It localises to the cytoplasm. The catalysed reaction is 4-phospho-D-erythronate + NAD(+) = (R)-3-hydroxy-2-oxo-4-phosphooxybutanoate + NADH + H(+). It participates in cofactor biosynthesis; pyridoxine 5'-phosphate biosynthesis; pyridoxine 5'-phosphate from D-erythrose 4-phosphate: step 2/5. Its function is as follows. Catalyzes the oxidation of erythronate-4-phosphate to 3-hydroxy-2-oxo-4-phosphonooxybutanoate. This Cronobacter sakazakii (strain ATCC BAA-894) (Enterobacter sakazakii) protein is Erythronate-4-phosphate dehydrogenase.